Consider the following 285-residue polypeptide: Baculoviral IAP repeat-containing protein 7 (285 aa).

Residues 18–47 (ESRARDSVRGPELSHREDGSGRTQEQDKPH) are disordered. Residues 19–47 (SRARDSVRGPELSHREDGSGRTQEQDKPH) show a composition bias toward basic and acidic residues. Residues 96-161 (RLASFYDWPS…RWFPRCQFLL (66 aa)) form a BIR repeat. Zn(2+)-binding residues include C130, C133, H150, and C157. Positions 184–225 (QREEPEDAVSATPSAPAHGSPELLRSRRETQPEDVSEPGAKD) are disordered. The RING-type zinc finger occupies 239–273 (CKVCLDRAVSIVFVPCGHFVCTECAPNLQLCPICR).

This sequence belongs to the IAP family. Binds to caspase-9. Interaction with DIABLO/SMAC via the BIR domain disrupts binding to caspase-9 and apoptotic suppressor activity. Interacts with TAB1. In vitro, interacts with caspase-3 and caspase-7 via its BIR domain. Post-translationally, autoubiquitinated and undergoes proteasome-mediated degradation. The truncated protein (tLivin) not only loses its anti-apoptotic effect but also acquires a pro-apoptotic effect.

It is found in the nucleus. It localises to the cytoplasm. The protein localises to the golgi apparatus. It catalyses the reaction S-ubiquitinyl-[E2 ubiquitin-conjugating enzyme]-L-cysteine + [acceptor protein]-L-lysine = [E2 ubiquitin-conjugating enzyme]-L-cysteine + N(6)-ubiquitinyl-[acceptor protein]-L-lysine.. Its function is as follows. Apoptotic regulator capable of exerting proapoptotic and anti-apoptotic activities and plays crucial roles in apoptosis, cell proliferation, and cell cycle control. Its anti-apoptotic activity is mediated through the inhibition of CASP3, CASP7 and CASP9, as well as by its E3 ubiquitin-protein ligase activity. As it is a weak caspase inhibitor, its anti-apoptotic activity is thought to be due to its ability to ubiquitinate DIABLO/SMAC targeting it for degradation thereby promoting cell survival. May contribute to caspase inhibition, by blocking the ability of DIABLO/SMAC to disrupt XIAP/BIRC4-caspase interactions. Protects against apoptosis induced by TNF or by chemical agents such as adriamycin, etoposide or staurosporine. Suppression of apoptosis is mediated by activation of MAPK8/JNK1, and possibly also of MAPK9/JNK2. This activation depends on TAB1 and MAP3K7/TAK1. In vitro, inhibits CASP3 and proteolytic activation of pro-CASP9. The sequence is that of Baculoviral IAP repeat-containing protein 7 (Birc7) from Mus musculus (Mouse).